The sequence spans 220 residues: Protein-methionine-sulfoxide reductase heme-binding subunit MsrQ (220 aa).

6 consecutive transmembrane segments (helical) span residues 20 to 40, 52 to 72, 86 to 106, 122 to 142, 153 to 173, and 175 to 195; these read LWLLYTAGFVPAVWTFYLGAT, EHLLGLWALRFLILTLLVTPI, ALGLLAFYYALMHFTTYMVLD, PFITIGMISLALLVPLALTSN, WSSLHKLVYIAIAGSAVHFLM, and VKSWPAEPVIYAAIVAALLLW.

The protein belongs to the MsrQ family. As to quaternary structure, heterodimer of a catalytic subunit (MsrP) and a heme-binding subunit (MsrQ). FMN serves as cofactor. It depends on heme b as a cofactor.

The protein localises to the cell inner membrane. Its function is as follows. Part of the MsrPQ system that repairs oxidized periplasmic proteins containing methionine sulfoxide residues (Met-O), using respiratory chain electrons. Thus protects these proteins from oxidative-stress damage caused by reactive species of oxygen and chlorine generated by the host defense mechanisms. MsrPQ is essential for the maintenance of envelope integrity under bleach stress, rescuing a wide series of structurally unrelated periplasmic proteins from methionine oxidation. MsrQ provides electrons for reduction to the reductase catalytic subunit MsrP, using the quinone pool of the respiratory chain. The protein is Protein-methionine-sulfoxide reductase heme-binding subunit MsrQ of Brucella abortus (strain S19).